Consider the following 114-residue polypeptide: C-X-C motif chemokine 5 (114 aa).

Positions 1–36 (MSLLSSRAARVPGPSSSLCALLVLLLLLTQPGPIAS) are cleaved as a signal peptide. Disulfide bonds link Cys-49/Cys-75 and Cys-51/Cys-91.

The protein belongs to the intercrine alpha (chemokine CxC) family. As to quaternary structure, monomer. Homodimer. In terms of processing, N-terminal processed forms ENA-78(8-78) and ENA-78(9-78) are produced by proteolytic cleavage after secretion from peripheral blood monocytes.

Its subcellular location is the secreted. Its function is as follows. Involved in neutrophil activation. In vitro, ENA-78(8-78) and ENA-78(9-78) show a threefold higher chemotactic activity for neutrophil granulocytes. The polypeptide is C-X-C motif chemokine 5 (CXCL5) (Homo sapiens (Human)).